The following is a 216-amino-acid chain: Small ribosomal subunit protein uS5 (216 aa).

The disordered stretch occupies residues 1-55 (MDKKLENQKDLLNQDPKVELNSQSVAKNPLNSREVKPIQRRRPLRKNARDKNSKP). Positions 20 to 31 (LNSQSVAKNPLN) are enriched in polar residues. One can recognise an S5 DRBM domain in the interval 57 to 120 (FEERVIAIHR…KDAQNRLVSV (64 aa)).

This sequence belongs to the universal ribosomal protein uS5 family. As to quaternary structure, part of the 30S ribosomal subunit. Contacts proteins S4 and S8.

In terms of biological role, with S4 and S12 plays an important role in translational accuracy. Located at the back of the 30S subunit body where it stabilizes the conformation of the head with respect to the body. The chain is Small ribosomal subunit protein uS5 from Mesomycoplasma hyopneumoniae (strain 7448) (Mycoplasma hyopneumoniae).